We begin with the raw amino-acid sequence, 373 residues long: UDP-N-acetylglucosamine--N-acetylmuramyl-(pentapeptide) pyrophosphoryl-undecaprenol N-acetylglucosamine transferase (373 aa).

Residues 13 to 15, Asn-124, Arg-165, Ser-192, and Gln-293 each bind UDP-N-acetyl-alpha-D-glucosamine; that span reads TGG.

It belongs to the glycosyltransferase 28 family. MurG subfamily.

Its subcellular location is the cell inner membrane. It carries out the reaction di-trans,octa-cis-undecaprenyl diphospho-N-acetyl-alpha-D-muramoyl-L-alanyl-D-glutamyl-meso-2,6-diaminopimeloyl-D-alanyl-D-alanine + UDP-N-acetyl-alpha-D-glucosamine = di-trans,octa-cis-undecaprenyl diphospho-[N-acetyl-alpha-D-glucosaminyl-(1-&gt;4)]-N-acetyl-alpha-D-muramoyl-L-alanyl-D-glutamyl-meso-2,6-diaminopimeloyl-D-alanyl-D-alanine + UDP + H(+). The protein operates within cell wall biogenesis; peptidoglycan biosynthesis. Functionally, cell wall formation. Catalyzes the transfer of a GlcNAc subunit on undecaprenyl-pyrophosphoryl-MurNAc-pentapeptide (lipid intermediate I) to form undecaprenyl-pyrophosphoryl-MurNAc-(pentapeptide)GlcNAc (lipid intermediate II). The protein is UDP-N-acetylglucosamine--N-acetylmuramyl-(pentapeptide) pyrophosphoryl-undecaprenol N-acetylglucosamine transferase of Sinorhizobium fredii (strain NBRC 101917 / NGR234).